The sequence spans 370 residues: MAAERQEALREFVAVTGAEEDRARFFLESAGWDLQIALASFYEDGGDEDIVTISQATPSSVSRGTAPSDNRVTSFRDLIHDQDEDEEEEEGQRFYAGGSERSGQQIVGPPRKKSPNELVDDLFKGAKEHGAVAVERVTKSPGETSKPRPFAGGGYRLGAAPEEESAYVAGEKRQHSSQDVHVVLKLWKSGFSLDNGELRSYQDPSNAQFLESIRRGEVPAELRRLAHGGQVNLDMEDHRDEDFVKPKGAFKAFTGEGQKLGSTAPQVLSTSSPAQQAENEAKASSSILIDESEPTTNIQIRLADGGRLVQKFNHSHRISDIRLFIVDARPAMAATSFILMTTFPNKELADESQTLKEANLLNAVIVQRLT.

Residues 54–73 are compositionally biased toward polar residues; it reads SQATPSSVSRGTAPSDNRVT. Residues 54–116 are disordered; it reads SQATPSSVSR…VGPPRKKSPN (63 aa). Residues Ser-74, Ser-102, Ser-114, and Ser-140 each carry the phosphoserine modification. Positions 109 to 115 match the Nuclear localization signal motif; the sequence is PPRKKSP. Tyr-167 is subject to Phosphotyrosine. A Nuclear localization signal motif is present at residues 172-175; that stretch reads KRQH. Ser-176, Ser-192, and Ser-272 each carry phosphoserine. Residues 179–244 form the SEP domain; that stretch reads DVHVVLKLWK…MEDHRDEDFV (66 aa). Polar residues predominate over residues 261-287; sequence GSTAPQVLSTSSPAQQAENEAKASSSI. Residues 261–289 are disordered; the sequence is GSTAPQVLSTSSPAQQAENEAKASSSILI. In terms of domain architecture, UBX spans 291–368; it reads ESEPTTNIQI…NLLNAVIVQR (78 aa).

The protein belongs to the NSFL1C family. Part of a ternary complex containing STX5A, NSFL1C and VCP. NSFL1C forms a homotrimer that binds to one end of a VCP homohexamer. The complex binds to membranes enriched in phosphatidylethanolamine-containing lipids and promotes Golgi membrane fusion. Interaction with VCIP135 leads to dissociation of the complex via ATP hydrolysis by VCP. Binds ubiquitin and mono-ubiquitinated proteins via its N-terminal UBA-like domain when bound to VCP. Post-translationally, phosphorylated during mitosis. Phosphorylation inhibits interaction with Golgi membranes and is required for the fragmentation of the Golgi stacks during mitosis.

It localises to the nucleus. The protein localises to the golgi apparatus. The protein resides in the golgi stack. It is found in the chromosome. Its subcellular location is the cytoplasm. It localises to the cytoskeleton. The protein localises to the microtubule organizing center. The protein resides in the centrosome. Reduces the ATPase activity of VCP. Necessary for the fragmentation of Golgi stacks during mitosis and for VCP-mediated reassembly of Golgi stacks after mitosis. May play a role in VCP-mediated formation of transitional endoplasmic reticulum (tER). Inhibits the activity of CTSL (in vitro). Together with UBXN2B/p37, regulates the centrosomal levels of kinase AURKA/Aurora A during mitotic progression by promoting AURKA removal from centrosomes in prophase. Also, regulates spindle orientation during mitosis. The polypeptide is NSFL1 cofactor p47 (NSFL1C) (Homo sapiens (Human)).